The following is a 2193-amino-acid chain: Protein sidekick-1 (2193 aa).

Residues 1–23 are compositionally biased toward low complexity; it reads MARARPSVAGGGVAAPPERAGPG. The disordered stretch occupies residues 1 to 56; that stretch reads MARARPSVAGGGVAAPPERAGPGRPRRSRTGHHCDPECPGLRAAPRTPGPGAGRRA. 5 Ig-like C2-type domains span residues 86 to 168, 173 to 259, 275 to 363, 368 to 458, and 462 to 551; these read PYFK…SEIQ, GNFM…SPFI, PIIV…AFLS, PYFT…LDVT, and PAFT…AMLT. Cysteine 108 and cysteine 151 are disulfide-bonded. N-linked (GlcNAc...) asparagine glycosylation is found at asparagine 123, asparagine 253, and asparagine 283. Cystine bridges form between cysteine 297-cysteine 344, cysteine 390-cysteine 440, and cysteine 483-cysteine 535. Asparagine 532, asparagine 545, and asparagine 554 each carry an N-linked (GlcNAc...) asparagine glycan. Residues 556–645 form the Ig-like C2-type 6 domain; the sequence is TSIVHPPEDR…GSDSRTARLE (90 aa). Cysteines 577 and 629 form a disulfide. Fibronectin type-III domains follow at residues 652–748, 753–849, 854–952, 956–1050, 1054–1153, 1158–1256, 1261–1358, 1362–1456, 1461–1558, 1563–1681, 1686–1782, 1786–1881, and 1884–1982; these read PPQN…LPEE, PPKN…TLQG, PPQN…THED, AVGH…VPPD, APSN…TLQA, APTS…TRES, APEN…TKDD, PPVR…TEKR, PPRE…TLQD, PPGS…VGEA, APQN…THQA, PPSF…AGPA, and SPGS…SAQA. Residues asparagine 764, asparagine 803, asparagine 864, asparagine 997, and asparagine 1006 are each glycosylated (N-linked (GlcNAc...) asparagine). N-linked (GlcNAc...) asparagine glycosylation is found at asparagine 1264 and asparagine 1315. N-linked (GlcNAc...) asparagine glycans are attached at residues asparagine 1636, asparagine 1730, asparagine 1801, and asparagine 1875. A helical membrane pass occupies residues 1992–2012; the sequence is FLLVMALSSLLLILLVVFVLV. At 2013 to 2193 the chain is on the cytoplasmic side; it reads LHGQSKKYKS…APLTGFSSFV (181 aa). Residues 2057-2080 form a disordered region; sequence STFSKKNGTRSPPRPSPGGLHYSD. The PDZ-binding signature appears at 2187–2193; the sequence is TGFSSFV.

Belongs to the sidekick family. In terms of assembly, homodimer; mediates homophilic interactions to promote cell adhesion. Interacts (via PDZ-binding motif) with MAGI1, MAGI2, DLG2, DLG3 and DLG4. Does not mediate homophilic interactions. In terms of tissue distribution, expressed by non-overlapping subsets of retinal neurons. Sdk1 and Sdk2 are expressed in non-overlapping subsets of interneurons and retinal ganglion cells (RGCs) that form synapses in distinct inner plexiform layer (IPL) sublaminae (at protein level).

It localises to the cell membrane. Its subcellular location is the synapse. In terms of biological role, adhesion molecule that promotes lamina-specific synaptic connections in the retina. Expressed in specific subsets of interneurons and retinal ganglion cells (RGCs) and promotes synaptic connectivity via homophilic interactions. This is Protein sidekick-1 from Mus musculus (Mouse).